Reading from the N-terminus, the 156-residue chain is Endogenous retrovirus group K member 8 Pro protein (156 aa).

Residues 21-96 (FEGLVDTGAD…IPLNLWGRDL (76 aa)) enclose the Peptidase A2 domain. The active site involves D26. One can recognise a G-patch domain in the interval 111-156 (YSPTSQKIMTKRGYIPGKGLGKNEDGIKIPFEAKINQKREGIGYPF).

This sequence belongs to the peptidase A2 family. HERV class-II K(HML-2) subfamily. In terms of assembly, active as a homodimer. Autoproteolytically processed at the N-terminus. Expected C-terminal autoprocessing not detected. The sequence shown is that of the processed Pro protein.

It catalyses the reaction Processing at the authentic HIV-1 PR recognition site and release of the mature p17 matrix and the p24 capsid protein, as a result of the cleavage of the -SQNY-|-PIVQ- cleavage site.. In terms of biological role, retroviral proteases have roles in the processing of the primary translation products and the maturation of the viral particle. Endogenous Pro proteins may have kept, lost or modified their original function during evolution. The polypeptide is Endogenous retrovirus group K member 8 Pro protein (ERVK-8) (Homo sapiens (Human)).